Consider the following 333-residue polypeptide: tRNA(Ile)-lysidine synthase (333 aa).

Position 33-38 (33-38 (SGGADS)) interacts with ATP.

Belongs to the tRNA(Ile)-lysidine synthase family.

The protein localises to the cytoplasm. It catalyses the reaction cytidine(34) in tRNA(Ile2) + L-lysine + ATP = lysidine(34) in tRNA(Ile2) + AMP + diphosphate + H(+). Functionally, ligates lysine onto the cytidine present at position 34 of the AUA codon-specific tRNA(Ile) that contains the anticodon CAU, in an ATP-dependent manner. Cytidine is converted to lysidine, thus changing the amino acid specificity of the tRNA from methionine to isoleucine. This is tRNA(Ile)-lysidine synthase from Salinispora arenicola (strain CNS-205).